A 457-amino-acid polypeptide reads, in one-letter code: tRNA-2-methylthio-N(6)-dimethylallyladenosine synthase (457 aa).

The MTTase N-terminal domain maps to 2 to 119 (KKVFIKTFGC…LPELIDARRR (118 aa)). [4Fe-4S] cluster contacts are provided by Cys-11, Cys-48, Cys-82, Cys-156, Cys-160, and Cys-163. In terms of domain architecture, Radical SAM core spans 142-375 (RVEGPSAFVS…QATIDANMAR (234 aa)). The TRAM domain maps to 378–448 (EGMVGSVQRI…PHSLRGDVVE (71 aa)).

The protein belongs to the methylthiotransferase family. MiaB subfamily. In terms of assembly, monomer. The cofactor is [4Fe-4S] cluster.

It localises to the cytoplasm. It carries out the reaction N(6)-dimethylallyladenosine(37) in tRNA + (sulfur carrier)-SH + AH2 + 2 S-adenosyl-L-methionine = 2-methylsulfanyl-N(6)-dimethylallyladenosine(37) in tRNA + (sulfur carrier)-H + 5'-deoxyadenosine + L-methionine + A + S-adenosyl-L-homocysteine + 2 H(+). In terms of biological role, catalyzes the methylthiolation of N6-(dimethylallyl)adenosine (i(6)A), leading to the formation of 2-methylthio-N6-(dimethylallyl)adenosine (ms(2)i(6)A) at position 37 in tRNAs that read codons beginning with uridine. This Ralstonia nicotianae (strain ATCC BAA-1114 / GMI1000) (Ralstonia solanacearum) protein is tRNA-2-methylthio-N(6)-dimethylallyladenosine synthase.